The primary structure comprises 124 residues: T cell receptor beta variable 13 (124 aa).

An N-terminal signal peptide occupies residues 1-31 (MLSPDLPDSAWNTRLLCRVMLCLLGAGSVAA). The Ig-like domain maps to 32-124 (GVIQSPRHLI…SALYFCASSL (93 aa)). An intrachain disulfide couples cysteine 52 to cysteine 120. Asparagine 106 carries N-linked (GlcNAc...) asparagine glycosylation.

Alpha-beta TR is a heterodimer composed of an alpha and beta chain; disulfide-linked. The alpha-beta TR is associated with the transmembrane signaling CD3 coreceptor proteins to form the TR-CD3 (TcR or TCR). The assembly of alpha-beta TR heterodimers with CD3 occurs in the endoplasmic reticulum where a single alpha-beta TR heterodimer associates with one CD3D-CD3E heterodimer, one CD3G-CD3E heterodimer and one CD247 homodimer forming a stable octameric structure. CD3D-CD3E and CD3G-CD3E heterodimers preferentially associate with TR alpha and TR beta chains, respectively. The association of the CD247 homodimer is the last step of TcR assembly in the endoplasmic reticulum and is required for transport to the cell surface.

Its subcellular location is the cell membrane. Its function is as follows. V region of the variable domain of T cell receptor (TR) beta chain that participates in the antigen recognition. Alpha-beta T cell receptors are antigen specific receptors which are essential to the immune response and are present on the cell surface of T lymphocytes. Recognize peptide-major histocompatibility (MH) (pMH) complexes that are displayed by antigen presenting cells (APC), a prerequisite for efficient T cell adaptive immunity against pathogens. Binding of alpha-beta TR to pMH complex initiates TR-CD3 clustering on the cell surface and intracellular activation of LCK that phosphorylates the ITAM motifs of CD3G, CD3D, CD3E and CD247 enabling the recruitment of ZAP70. In turn ZAP70 phosphorylates LAT, which recruits numerous signaling molecules to form the LAT signalosome. The LAT signalosome propagates signal branching to three major signaling pathways, the calcium, the mitogen-activated protein kinase (MAPK) kinase and the nuclear factor NF-kappa-B (NF-kB) pathways, leading to the mobilization of transcription factors that are critical for gene expression and essential for T cell growth and differentiation. The T cell repertoire is generated in the thymus, by V-(D)-J rearrangement. This repertoire is then shaped by intrathymic selection events to generate a peripheral T cell pool of self-MH restricted, non-autoaggressive T cells. Post-thymic interaction of alpha-beta TR with the pMH complexes shapes TR structural and functional avidity. This chain is T cell receptor beta variable 13, found in Homo sapiens (Human).